The chain runs to 625 residues: RecQ-mediated genome instability protein 1 (625 aa).

M1 is modified (N-acetylmethionine). The residue at position 225 (S225) is a Phosphoserine. Residues 257 to 282 (LTANNDTSSERCFTTGSSSNTIPTRQ) are disordered. Phosphoserine occurs at positions 284 and 292. Glycyl lysine isopeptide (Lys-Gly) (interchain with G-Cter in SUMO2) cross-links involve residues K334, K387, and K426.

Belongs to the RMI1 family. In terms of assembly, component of the RMI complex, containing at least TOP3A, RMI1 and RMI2. The RMI complex interacts with BLM. Directly interacts with RMI2 and TOP3A. May bind DHJ. Interacts (via N-terminal region) with BLM; the interaction is direct.

It is found in the nucleus. Essential component of the RMI complex, a complex that plays an important role in the processing of homologous recombination intermediates to limit DNA crossover formation in cells. Promotes TOP3A binding to double Holliday junctions (DHJ) and hence stimulates TOP3A-mediated dissolution. Required for BLM phosphorylation during mitosis. Within the BLM complex, required for BLM and TOP3A stability. This is RecQ-mediated genome instability protein 1 (RMI1) from Homo sapiens (Human).